Reading from the N-terminus, the 179-residue chain is MAKQPEDWLNDYPAEEEEEEIIWVSKSEIKRDAEALKKLGTELVELSKSALERVPLDEDLLAAIELAQKIKREGRRRQLQFIGKLLRTRDVEPITIALDKLKNRHNQQITLLHKLEELRDKLIDGNDDVIDEVVALFPQTDRQQLRTLIRNAKKEKAANKPPKSYRQIFQYLKDMAESA.

The protein belongs to the DarP family.

The protein localises to the cytoplasm. In terms of biological role, member of a network of 50S ribosomal subunit biogenesis factors which assembles along the 30S-50S interface, preventing incorrect 23S rRNA structures from forming. Promotes peptidyl transferase center (PTC) maturation. The polypeptide is Dual-action ribosomal maturation protein DarP (Photorhabdus laumondii subsp. laumondii (strain DSM 15139 / CIP 105565 / TT01) (Photorhabdus luminescens subsp. laumondii)).